The following is a 179-amino-acid chain: 3-hydroxyanthranilate 3,4-dioxygenase (179 aa).

Position 47 (arginine 47) interacts with O2. Fe cation-binding residues include histidine 51, glutamate 57, and histidine 96. A substrate-binding site is contributed by glutamate 57. Substrate contacts are provided by arginine 100 and glutamate 110. 4 residues coordinate Fe cation: cysteine 125, cysteine 128, cysteine 162, and cysteine 165.

Belongs to the 3-HAO family. It depends on Fe(2+) as a cofactor.

The enzyme catalyses 3-hydroxyanthranilate + O2 = (2Z,4Z)-2-amino-3-carboxymuconate 6-semialdehyde. Its pathway is cofactor biosynthesis; NAD(+) biosynthesis; quinolinate from L-kynurenine: step 3/3. Functionally, catalyzes the oxidative ring opening of 3-hydroxyanthranilate to 2-amino-3-carboxymuconate semialdehyde, which spontaneously cyclizes to quinolinate. This Bacillus cereus (strain ATCC 10987 / NRS 248) protein is 3-hydroxyanthranilate 3,4-dioxygenase.